The following is a 142-amino-acid chain: Cell wall-binding protein YqgA (142 aa).

A signal peptide spans 1–28 (MKQGKFSVFLILLLMLTLVVAPKEKAEA).

Found in a complex with F(1)F(0) ATP synthase and SpoIIIJ and YqjG.

The protein resides in the secreted. It localises to the cell wall. The polypeptide is Cell wall-binding protein YqgA (yqgA) (Bacillus subtilis (strain 168)).